The primary structure comprises 346 residues: MYRFTDFDVSNISIYLNHVLFYTTQQAGDLEHMETRNYSAMTEFFLVGLSQYPELQLFLFLLCLIMYMIILLGNSLLIIITILDSRLHTPMYFFLGNLSFLDICYTSSSIPPMLIIFMSERKSISFIGCALQMVVSLGLGSTECVLLAVMAYDHYVAICNPLRYSIIMNGVLYVQMAAWSWIIGCLTSLLQTVLTMMLPFCGNNVIDHITCEILALLKLVCSDITINVLIMTVTNIVSLVILLLLIFISYVFILSSILRINCAEGRKKAFSTCSAHSIVVILFYGSALFMYMKPKSKNTNTSDEIIGLSYGVVSPMLNPIIYSLRNKEVKEAVKKVLSRHLHLLKM.

Residues 1–57 (MYRFTDFDVSNISIYLNHVLFYTTQQAGDLEHMETRNYSAMTEFFLVGLSQYPELQL) lie on the Extracellular side of the membrane. N-linked (GlcNAc...) asparagine glycosylation occurs at Asn-37. A helical membrane pass occupies residues 58–78 (FLFLLCLIMYMIILLGNSLLI). Residues 79–86 (IITILDSR) lie on the Cytoplasmic side of the membrane. The helical transmembrane segment at 87–107 (LHTPMYFFLGNLSFLDICYTS) threads the bilayer. Topologically, residues 108–131 (SSIPPMLIIFMSERKSISFIGCAL) are extracellular. Residues Cys-129 and Cys-221 are joined by a disulfide bond. The chain crosses the membrane as a helical span at residues 132 to 152 (QMVVSLGLGSTECVLLAVMAY). Over 153–171 (DHYVAICNPLRYSIIMNGV) the chain is Cytoplasmic. A helical transmembrane segment spans residues 172–192 (LYVQMAAWSWIIGCLTSLLQT). At 193 to 229 (VLTMMLPFCGNNVIDHITCEILALLKLVCSDITINVL) the chain is on the extracellular side. The helical transmembrane segment at 230–249 (IMTVTNIVSLVILLLLIFIS) threads the bilayer. Topologically, residues 250 to 269 (YVFILSSILRINCAEGRKKA) are cytoplasmic. The helical transmembrane segment at 270–290 (FSTCSAHSIVVILFYGSALFM) threads the bilayer. Residues 291 to 303 (YMKPKSKNTNTSD) lie on the Extracellular side of the membrane. Residue Asn-300 is glycosylated (N-linked (GlcNAc...) asparagine). A helical transmembrane segment spans residues 304–324 (EIIGLSYGVVSPMLNPIIYSL). The Cytoplasmic segment spans residues 325–346 (RNKEVKEAVKKVLSRHLHLLKM).

Belongs to the G-protein coupled receptor 1 family.

The protein localises to the cell membrane. Functionally, odorant receptor. The protein is Olfactory receptor 13D1 (OR13D1) of Homo sapiens (Human).